Here is a 351-residue protein sequence, read N- to C-terminus: MDKFRMMFQFLQSNQESFMNGICGIMALASAQMYSSFEFSCPCMPEYNYTYGIGLLIIPPIWFFLLGFVLNNNVSVLAEEWKRPTGRRTKDPSVLRYMLCSITQRSLIAPAVWVSVTLMDGKSFLCAFSINLDIEKFGNASLVIGMTETEKLKFLARIPCKDLFEDNEVRVAATRYIKCISQACGWMFLLMMTFTAFLIRAIRPCFTQAAFLKTKYWSHYIDIERKMFDETCKEHAKSFAKVCIHQYFENISGEMQNFHRHQSKDTSDAEEEEKQRSDEDKLLGIKAQEDMNKVLWNWHTCKPALALRKDHLDTESNGKLNGTMNGAVNGFAQGHTHDVAKKEWAVYYSKV.

Over 1-20 the chain is Cytoplasmic; sequence MDKFRMMFQFLQSNQESFMN. The interval 9-36 is central pore; sequence QFLQSNQESFMNGICGIMALASAQMYSS. A helical membrane pass occupies residues 21-36; the sequence is GICGIMALASAQMYSS. The Extracellular segment spans residues 37 to 48; the sequence is FEFSCPCMPEYN. 2 cysteine pairs are disulfide-bonded: cysteine 41-cysteine 126 and cysteine 43-cysteine 160. The helical transmembrane segment at 49–71 threads the bilayer; the sequence is YTYGIGLLIIPPIWFFLLGFVLN. A phospholipid-binding region spans residues 62–69; the sequence is WFFLLGFV. Over 72-98 the chain is Cytoplasmic; it reads NNVSVLAEEWKRPTGRRTKDPSVLRYM. A helical membrane pass occupies residues 99–124; sequence LCSITQRSLIAPAVWVSVTLMDGKSF. Cysteine 100 is lipidated: S-palmitoyl cysteine. The tract at residues 104–116 is phospholipid-binding; sequence QRSLIAPAVWVSV. Over 125–177 the chain is Extracellular; that stretch reads LCAFSINLDIEKFGNASLVIGMTETEKLKFLARIPCKDLFEDNEVRVAATRYI. Asparagine 139 carries N-linked (GlcNAc...) asparagine glycosylation. Residues 178–203 traverse the membrane as a helical segment; that stretch reads KCISQACGWMFLLMMTFTAFLIRAIR. The phospholipid-binding stretch occupies residues 189 to 199; that stretch reads LLMMTFTAFLI. Residues 204-351 lie on the Cytoplasmic side of the membrane; sequence PCFTQAAFLK…KEWAVYYSKV (148 aa). The S-palmitoyl cysteine moiety is linked to residue cysteine 205. The segment at 259–281 is disordered; the sequence is HRHQSKDTSDAEEEEKQRSDEDK. Over residues 263–281 the composition is skewed to basic and acidic residues; the sequence is SKDTSDAEEEEKQRSDEDK.

Belongs to the CALHM family. As to quaternary structure, oligomerizes to form hexamers and octamers. Does not form gap junctions. Associates with CALHM3 as a pore-forming subunit in a hetero-hexameric channel complex. Post-translationally, N-glycosylated. Palmitoylated.

The protein localises to the cell membrane. Its subcellular location is the endoplasmic reticulum membrane. It localises to the basolateral cell membrane. It carries out the reaction ATP(in) = ATP(out). The catalysed reaction is Ca(2+)(in) = Ca(2+)(out). It catalyses the reaction Mg(2+)(in) = Mg(2+)(out). The enzyme catalyses Na(+)(in) = Na(+)(out). It carries out the reaction K(+)(in) = K(+)(out). The catalysed reaction is Li(+)(in) = Li(+)(out). It catalyses the reaction Rb(+)(in) = Rb(+)(out). The enzyme catalyses Cs(+)(in) = Cs(+)(out). It carries out the reaction chloride(in) = chloride(out). Activated in response to membrane depolarization and low extracellular Ca(2+) concentration. Inhibited by ruthenium red. Pore-forming subunit of a voltage-gated ion channel. Has poor ion selectivity and forms a wide pore that mediates permeation of small ions including Ca(2+), Na(+), K(+) and Cl(-), as well as larger ions such as ATP(4-). In Oryzias latipes (Japanese rice fish), this protein is Calcium homeostasis modulator 1.